The sequence spans 145 residues: UPF0179 protein Maeo_1037 (145 aa).

Belongs to the UPF0179 family.

The sequence is that of UPF0179 protein Maeo_1037 from Methanococcus aeolicus (strain ATCC BAA-1280 / DSM 17508 / OCM 812 / Nankai-3).